A 62-amino-acid polypeptide reads, in one-letter code: MTVALQSAVFASIAIPFIPVIGVPAVFASPDGWSSGKNVVFSGATPRIGPVPLVGILNSSVS.

A run of 2 helical transmembrane segments spans residues Ala8–Ala28 and Phe41–Val61.

It belongs to the PsbZ family. PSII is composed of 1 copy each of membrane proteins PsbA, PsbB, PsbC, PsbD, PsbE, PsbF, PsbH, PsbI, PsbJ, PsbK, PsbL, PsbM, PsbT, PsbY, PsbZ, Psb30/Ycf12, at least 3 peripheral proteins of the oxygen-evolving complex and a large number of cofactors. It forms dimeric complexes.

It localises to the plastid. The protein resides in the chloroplast thylakoid membrane. Functionally, may control the interaction of photosystem II (PSII) cores with the light-harvesting antenna, regulates electron flow through the 2 photosystem reaction centers. PSII is a light-driven water plastoquinone oxidoreductase, using light energy to abstract electrons from H(2)O, generating a proton gradient subsequently used for ATP formation. In Selaginella uncinata (Blue spike-moss), this protein is Photosystem II reaction center protein Z.